The following is a 116-amino-acid chain: Vesicle-associated membrane protein 5 (116 aa).

Residues 1–72 lie on the Cytoplasmic side of the membrane; it reads MAGKELERCQ…RWENARCRIY (72 aa). The v-SNARE coiled-coil homology domain occupies 5 to 65; the sequence is ELERCQRQAD…KTLAQKKRWE (61 aa). S41, S48, and S49 each carry phosphoserine. Residues 73-93 form a helical; Anchor for type IV membrane protein membrane-spanning segment; that stretch reads MGLAVGIALLILLIVLLVIFL. Over 94 to 116 the chain is Vesicular; that stretch reads PQSSKGSSAPQVQDAGPASGPGE. The segment at 97 to 116 is disordered; the sequence is SKGSSAPQVQDAGPASGPGE.

It belongs to the synaptobrevin family.

It is found in the cell membrane. The protein resides in the endomembrane system. The protein localises to the golgi apparatus. Its subcellular location is the trans-Golgi network membrane. Its function is as follows. May participate in trafficking events that are associated with myogenesis, such as myoblast fusion and/or GLUT4 trafficking. The protein is Vesicle-associated membrane protein 5 (VAMP5) of Bos taurus (Bovine).